Reading from the N-terminus, the 687-residue chain is Dentin sialophosphoprotein (687 aa).

Positions methionine 1 to alanine 17 are cleaved as a signal peptide. The disordered stretch occupies residues asparagine 54–aspartate 113. Residue asparagine 55 is glycosylated (N-linked (GlcNAc...) asparagine). At threonine 57 the chain carries Phosphothreonine; by CK2. An N-linked (GlcNAc...) asparagine glycan is attached at asparagine 82. The span at serine 93–serine 107 shows a compositional bias: polar residues. The N-linked (GlcNAc...) asparagine glycan is linked to asparagine 128. Residues glutamate 146–threonine 160 show a composition bias toward basic and acidic residues. A disordered region spans residues glutamate 146–aspartate 687. Residues lysine 161–glutamate 194 show a composition bias toward polar residues. N-linked (GlcNAc...) asparagine glycosylation is present at asparagine 189. The residue at position 226 (serine 226) is a Phosphoserine; by CK2. Serine 253 carries the post-translational modification Phosphoserine; by CK1. A compositionally biased stretch (basic and acidic residues) spans glycine 262 to glutamate 275. A compositionally biased stretch (polar residues) spans glycine 276–serine 292. Serine 278 is modified (phosphoserine; by CK1). Phosphoserine; by CK2 is present on serine 292. Position 298 is a phosphoserine; by CK1 (serine 298). N-linked (GlcNAc...) asparagine glycosylation is present at asparagine 312. Residue serine 315 is modified to Phosphoserine; by CK2. Phosphothreonine; by CK2 occurs at positions 319 and 329. Serine 337 and serine 345 each carry phosphoserine; by CK2. Residues serine 352–lysine 375 are compositionally biased toward polar residues. Position 366 is a phosphoserine; by CK1 (serine 366). A glycan (N-linked (GlcNAc...) asparagine) is linked at asparagine 369. Basic and acidic residues predominate over residues serine 386–threonine 417. Residues histidine 418–serine 432 are compositionally biased toward polar residues. Residues glycine 447–aspartate 460 are compositionally biased toward low complexity. The span at aspartate 500–glutamate 521 shows a compositional bias: acidic residues. Residues serine 522–serine 545 show a composition bias toward basic and acidic residues. Low complexity predominate over residues serine 555 to serine 598. Residues aspartate 599–aspartate 617 are compositionally biased toward acidic residues. Over residues serine 618 to serine 639 the composition is skewed to low complexity. Over residues serine 667–glycine 677 the composition is skewed to acidic residues. Residues serine 678–aspartate 687 are compositionally biased toward low complexity.

In terms of assembly, interacts with FBLN7. Post-translationally, DSP is glycosylated. In terms of tissue distribution, specifically expressed in teeth, mainly in odontoblasts and transiently in pre-ameloblasts.

The protein resides in the secreted. It localises to the extracellular space. It is found in the extracellular matrix. Functionally, DSP may be an important factor in dentinogenesis. DPP may bind high amount of calcium and facilitate initial mineralization of dentin matrix collagen as well as regulate the size and shape of the crystals. The polypeptide is Dentin sialophosphoprotein (Dspp) (Rattus norvegicus (Rat)).